The primary structure comprises 274 residues: Large ribosomal subunit protein uL2 (274 aa).

The disordered stretch occupies residues 214-274; it reads LGRRPRTRPV…NKYIVERRKK (61 aa).

It belongs to the universal ribosomal protein uL2 family. In terms of assembly, part of the 50S ribosomal subunit. Forms a bridge to the 30S subunit in the 70S ribosome.

In terms of biological role, one of the primary rRNA binding proteins. Required for association of the 30S and 50S subunits to form the 70S ribosome, for tRNA binding and peptide bond formation. It has been suggested to have peptidyltransferase activity; this is somewhat controversial. Makes several contacts with the 16S rRNA in the 70S ribosome. This Flavobacterium johnsoniae (strain ATCC 17061 / DSM 2064 / JCM 8514 / BCRC 14874 / CCUG 350202 / NBRC 14942 / NCIMB 11054 / UW101) (Cytophaga johnsonae) protein is Large ribosomal subunit protein uL2.